A 328-amino-acid polypeptide reads, in one-letter code: MYAIAEDTLPARVLKELLLYRRRYPEHRQSASEADEIRRIEQVQLPRIAAFIEAGEPIEFVLPAFPAKSPNPGKVLDSRPDMAERLSLSFLNHLCQRIQLFYAPGAKITVCSDGRVFGDLVRIGDAHISAYQDALRLMIEEIGATHIGVFNLEDVRAFEAQRDNHEQLRQLLIGGYAEPLESIRETLLASEEGLLLYRAITRFLYEDGLTPDYQGSKTALQRDAKERAYGVIQRSWAWGALLADQFPRAIRLSIHPQPADSLKFGIHMMPTRDDWLTPWHGVAVNTEDRFVLMKRSEVLELGGELVQINGQPSHYRLPARAARRAAVA.

Belongs to the isocyanide synthase family. Monomer in solution.

It catalyses the reaction D-ribulose 5-phosphate + L-tyrosine = (2S)-3-(4-hydroxyphenyl)-2-isocyanopropanoate + hydroxyacetone + formaldehyde + phosphate + H2O + H(+). Involved in the biosynthesis of paerucumarin, a cyclized isocyano derivative of tyrosine. Responsible for the synthesis of the isonitrile group on tyrosine using the C2 of ribulose 5-phosphate as the source of the carbon atom. The polypeptide is L-tyrosine isonitrile synthase (Pseudomonas aeruginosa (strain ATCC 15692 / DSM 22644 / CIP 104116 / JCM 14847 / LMG 12228 / 1C / PRS 101 / PAO1)).